The following is a 316-amino-acid chain: Ribosomal protein L11 methyltransferase (316 aa).

The S-adenosyl-L-methionine site is built by T157, G178, D200, and N243.

The protein belongs to the methyltransferase superfamily. PrmA family.

Its subcellular location is the cytoplasm. It carries out the reaction L-lysyl-[protein] + 3 S-adenosyl-L-methionine = N(6),N(6),N(6)-trimethyl-L-lysyl-[protein] + 3 S-adenosyl-L-homocysteine + 3 H(+). Functionally, methylates ribosomal protein L11. The chain is Ribosomal protein L11 methyltransferase from Streptococcus pneumoniae serotype 4 (strain ATCC BAA-334 / TIGR4).